The following is a 423-amino-acid chain: Cytochrome b mRNA maturase bI2 (423 aa).

The Mitochondrial matrix portion of the chain corresponds to 1–31 (MAFRKSNVYLSLVNSYIIDSPQPSSINYWWN). The tract at residues 1-143 (MAFRKSNVYL…CVYGQMSHWG (143 aa)) is cytochrome b. Residues 32–52 (MGSLLGLCLVIQIVTGIFMAM) form a helical membrane-spanning segment. The Mitochondrial intermembrane segment spans residues 53-84 (HYSSNIELAFSSVEHIMRDVHNGYILRYLHAN). Residues 85 to 105 (GASFFFMVMFMHMAKGLYYGS) traverse the membrane as a helical segment. The Mitochondrial matrix portion of the chain corresponds to 106 to 115 (YRSPRVTLWN). Residues 116-136 (VGVIIFILTIATAFLGYCCVY) traverse the membrane as a helical segment. Topologically, residues 137–153 (GQMSHWGNMNIASNMFN) are mitochondrial intermembrane. Residues 144–423 (NMNIASNMFN…SMKYKLGNYL (280 aa)) are maturase. A helical membrane pass occupies residues 154-174 (MMKTIYMMMLMLLIYIFYTIM). At 175 to 423 (MRQMMKTKEY…SMKYKLGNYL (249 aa)) the chain is on the mitochondrial matrix side.

In the N-terminal section; belongs to the cytochrome b family. The protein in the C-terminal section; belongs to the LAGLIDADG endonuclease family.

It localises to the mitochondrion inner membrane. In terms of biological role, this protein is responsible for splicing and maturation of cytochrome b mRNA. Specifically, it may be responsible for the splicing specificity of the second intron. This chain is Cytochrome b mRNA maturase bI2 (BI2), found in Saccharomyces cerevisiae (strain ATCC 204508 / S288c) (Baker's yeast).